The primary structure comprises 175 residues: Nucleoside-triphosphatase THEP1 (175 aa).

Residues 15-22 and 106-113 each bind ATP; these read GNPGVGKT and VLAIDEIG.

The protein belongs to the THEP1 NTPase family.

The catalysed reaction is a ribonucleoside 5'-triphosphate + H2O = a ribonucleoside 5'-diphosphate + phosphate + H(+). In terms of biological role, has nucleotide phosphatase activity towards ATP, GTP, CTP, TTP and UTP. May hydrolyze nucleoside diphosphates with lower efficiency. The chain is Nucleoside-triphosphatase THEP1 from Saccharolobus solfataricus (strain ATCC 35092 / DSM 1617 / JCM 11322 / P2) (Sulfolobus solfataricus).